A 146-amino-acid polypeptide reads, in one-letter code: Hemoglobin subunit beta (146 aa).

In terms of domain architecture, Globin spans 2–146 (EWTDFERATI…VVNSLGRQYH (145 aa)). His-63 and His-92 together coordinate heme b.

The protein belongs to the globin family. In terms of assembly, heterotetramer of two alpha chains and two beta chains. Can form polymers. As to expression, red blood cells.

Functionally, involved in oxygen transport from gills to the various peripheral tissues. In Chelidonichthys kumu (Bluefin gurnard), this protein is Hemoglobin subunit beta (hbb).